The following is a 432-amino-acid chain: Glutamyl-tRNA reductase (432 aa).

Residues 49-52 (TCNR), S107, 112-114 (ETQ), and Q118 each bind substrate. Catalysis depends on C50, which acts as the Nucleophile. 186–191 (GAGEMG) lines the NADP(+) pocket.

Belongs to the glutamyl-tRNA reductase family. In terms of assembly, homodimer.

It catalyses the reaction (S)-4-amino-5-oxopentanoate + tRNA(Glu) + NADP(+) = L-glutamyl-tRNA(Glu) + NADPH + H(+). Its pathway is porphyrin-containing compound metabolism; protoporphyrin-IX biosynthesis; 5-aminolevulinate from L-glutamyl-tRNA(Glu): step 1/2. Catalyzes the NADPH-dependent reduction of glutamyl-tRNA(Glu) to glutamate 1-semialdehyde (GSA). The chain is Glutamyl-tRNA reductase from Campylobacter jejuni subsp. jejuni serotype O:6 (strain 81116 / NCTC 11828).